The sequence spans 219 residues: MDTWHDALGGEKQQPYFQEILNAVRQERLSGQIIYPPEADVFNAFRLTAFDRVKVVILGQDPYHGVGQAHGLAFSVRQGVRIPPSLLNIYKELETDIEGFSIPAHGCLTAWAEQGILLLNTVLTVRAGQAHSHALLGWERFTDTVIRQLATHRKHLVFMLWGGYAQQKGRLIDSQNHLILTAPHPSPLSAYRGFFGCRHFSQANSYLSQHGIEPINWKL.

The active-site Proton acceptor is Asp-61.

Belongs to the uracil-DNA glycosylase (UDG) superfamily. UNG family.

The protein resides in the cytoplasm. It carries out the reaction Hydrolyzes single-stranded DNA or mismatched double-stranded DNA and polynucleotides, releasing free uracil.. Functionally, excises uracil residues from the DNA which can arise as a result of misincorporation of dUMP residues by DNA polymerase or due to deamination of cytosine. The sequence is that of Uracil-DNA glycosylase from Neisseria gonorrhoeae (strain ATCC 700825 / FA 1090).